We begin with the raw amino-acid sequence, 611 residues long: Serine protease FAM111A (611 aa).

Residues 16–28 carry the PIP-box motif; it reads KCNMKIEHYFSPV. Lysine 20 is covalently cross-linked (Glycyl lysine isopeptide (Lys-Gly) (interchain with G-Cter in SUMO2)). At serine 26 the chain carries Phosphoserine. Residues lysine 30 and lysine 65 each participate in a glycyl lysine isopeptide (Lys-Gly) (interchain with G-Cter in SUMO2) cross-link. The interval 44–73 is disordered; that stretch reads ESRGDPRATTNTQAQRFHSPKKNPEDQTMP. An interaction with SV40 large T antigen region spans residues 336-611; the sequence is KVTKNSSSIK…DVEMMSDEDL (276 aa). Residues histidine 385, aspartate 439, and serine 541 each act as charge relay system in the active site.

This sequence belongs to the FAM111 family. As to quaternary structure, interacts (via PIP-box) with PCNA; then interaction is direct. (Microbial infection) Interacts with SV40 virus large T antigen and this interaction is required for efficient viral replication and sustained viral gene expression in restrictive cell types. In terms of assembly, (Microbial infection) Interacts with vaccinia virus protein OPG079; this interaction promotes the degradation of OPG079. In terms of processing, autocatalytically cleaved; activating the protein. Autocatalytic cleavage takes place in trans.

Its subcellular location is the nucleus. It is found in the chromosome. It localises to the cytoplasm. Functionally, single-stranded DNA-binding serine protease that mediates the proteolytic cleavage of covalent DNA-protein cross-links (DPCs) during DNA synthesis, thereby playing a key role in maintaining genomic integrity. DPCs are highly toxic DNA lesions that interfere with essential chromatin transactions, such as replication and transcription, and which are induced by reactive agents, such as UV light or formaldehyde. Protects replication fork from stalling by removing DPCs, such as covalently trapped topoisomerase 1 (TOP1) adducts on DNA lesion, or poly(ADP-ribose) polymerase 1 (PARP1)-DNA complexes trapped by PARP inhibitors. Required for PCNA loading on replication sites. Promotes S-phase entry and DNA synthesis. Also acts as a restriction factor for some viruses including SV40 polyomavirus and vaccinia virus. Mechanistically, affects nuclear barrier function during viral replication by mediating the disruption of the nuclear pore complex (NPC) via its protease activity. In turn, interacts with vaccinia virus DNA-binding protein OPG079 in the cytoplasm and promotes its degradation without the need of its protease activity but through autophagy. This is Serine protease FAM111A from Homo sapiens (Human).